The following is a 170-amino-acid chain: Photosystem I assembly protein Ycf3 (170 aa).

3 TPR repeats span residues 35–68 (AFTY…EIDP), 72–105 (SYIL…NPFL), and 120–153 (GEQA…TPGN).

Belongs to the Ycf3 family.

The protein resides in the plastid. It localises to the chloroplast thylakoid membrane. Its function is as follows. Essential for the assembly of the photosystem I (PSI) complex. May act as a chaperone-like factor to guide the assembly of the PSI subunits. The sequence is that of Photosystem I assembly protein Ycf3 from Oryza nivara (Indian wild rice).